The chain runs to 364 residues: Putative [LysW]-aminoadipate semialdehyde/glutamate semialdehyde transaminase (364 aa).

Residues G90–T91 and F117 each bind pyridoxal 5'-phosphate. R120 provides a ligand contact to substrate. D202–Q205 contacts pyridoxal 5'-phosphate. K230 carries the N6-(pyridoxal phosphate)lysine modification. S254 is a binding site for substrate. Pyridoxal 5'-phosphate is bound at residue T255.

The protein belongs to the class-III pyridoxal-phosphate-dependent aminotransferase family. LysJ subfamily. Homodimer. Pyridoxal 5'-phosphate is required as a cofactor.

It localises to the cytoplasm. The catalysed reaction is [amino-group carrier protein]-C-terminal-gamma-(L-lysyl)-L-glutamate + 2-oxoglutarate = [amino-group carrier protein]-C-terminal-N-(1-carboxy-5-oxopentan-1-yl)-L-glutamine + L-glutamate. The enzyme catalyses [amino-group carrier protein]-C-terminal-gamma-(L-ornithyl)-L-glutamate + 2-oxoglutarate = [amino-group carrier protein]-C-terminal-gamma-(L-glutamyl-5-semialdehyde)-L-glutamate + L-glutamate. Its pathway is amino-acid biosynthesis; L-lysine biosynthesis via AAA pathway; L-lysine from L-alpha-aminoadipate (Thermus route): step 4/5. It participates in amino-acid biosynthesis; L-arginine biosynthesis. Its function is as follows. Involved in both the arginine and lysine biosynthetic pathways. The polypeptide is Putative [LysW]-aminoadipate semialdehyde/glutamate semialdehyde transaminase (Pyrococcus abyssi (strain GE5 / Orsay)).